We begin with the raw amino-acid sequence, 299 residues long: Phosphoribosylaminoimidazole-succinocarboxamide synthase (299 aa).

Belongs to the SAICAR synthetase family.

The catalysed reaction is 5-amino-1-(5-phospho-D-ribosyl)imidazole-4-carboxylate + L-aspartate + ATP = (2S)-2-[5-amino-1-(5-phospho-beta-D-ribosyl)imidazole-4-carboxamido]succinate + ADP + phosphate + 2 H(+). It functions in the pathway purine metabolism; IMP biosynthesis via de novo pathway; 5-amino-1-(5-phospho-D-ribosyl)imidazole-4-carboxamide from 5-amino-1-(5-phospho-D-ribosyl)imidazole-4-carboxylate: step 1/2. This chain is Phosphoribosylaminoimidazole-succinocarboxamide synthase, found in Streptomyces coelicolor (strain ATCC BAA-471 / A3(2) / M145).